The primary structure comprises 322 residues: Phosphatidylserine decarboxylase proenzyme (322 aa).

Catalysis depends on charge relay system; for autoendoproteolytic cleavage activity residues Asp90, His147, and Ser254. Ser254 serves as the catalytic Schiff-base intermediate with substrate; via pyruvic acid; for decarboxylase activity. At Ser254 the chain carries Pyruvic acid (Ser); by autocatalysis. Positions 296-322 (EPAPLPAEEIKAEHDASPLVDNKKDDT) are disordered. The segment covering 303–322 (EEIKAEHDASPLVDNKKDDT) has biased composition (basic and acidic residues).

It belongs to the phosphatidylserine decarboxylase family. PSD-B subfamily. Prokaryotic type I sub-subfamily. Heterodimer of a large membrane-associated beta subunit and a small pyruvoyl-containing alpha subunit. Pyruvate is required as a cofactor. In terms of processing, is synthesized initially as an inactive proenzyme. Formation of the active enzyme involves a self-maturation process in which the active site pyruvoyl group is generated from an internal serine residue via an autocatalytic post-translational modification. Two non-identical subunits are generated from the proenzyme in this reaction, and the pyruvate is formed at the N-terminus of the alpha chain, which is derived from the carboxyl end of the proenzyme. The autoendoproteolytic cleavage occurs by a canonical serine protease mechanism, in which the side chain hydroxyl group of the serine supplies its oxygen atom to form the C-terminus of the beta chain, while the remainder of the serine residue undergoes an oxidative deamination to produce ammonia and the pyruvoyl prosthetic group on the alpha chain. During this reaction, the Ser that is part of the protease active site of the proenzyme becomes the pyruvoyl prosthetic group, which constitutes an essential element of the active site of the mature decarboxylase.

It is found in the cell membrane. The catalysed reaction is a 1,2-diacyl-sn-glycero-3-phospho-L-serine + H(+) = a 1,2-diacyl-sn-glycero-3-phosphoethanolamine + CO2. The protein operates within phospholipid metabolism; phosphatidylethanolamine biosynthesis; phosphatidylethanolamine from CDP-diacylglycerol: step 2/2. In terms of biological role, catalyzes the formation of phosphatidylethanolamine (PtdEtn) from phosphatidylserine (PtdSer). The sequence is that of Phosphatidylserine decarboxylase proenzyme from Salmonella dublin (strain CT_02021853).